A 366-amino-acid chain; its full sequence is Peptide chain release factor 1 (366 aa).

The residue at position 230 (Gln230) is an N5-methylglutamine. Basic and acidic residues-rich tracts occupy residues 283–293 (ARDAQEARDRA) and 315–328 (VTDH…KNHP). Residues 283–335 (ARDAQEARDRAAQVGSGERSEKIRTYNYPQNRVTDHRLEGDSKNHPLDSVMAG) form a disordered region.

It belongs to the prokaryotic/mitochondrial release factor family. Post-translationally, methylated by PrmC. Methylation increases the termination efficiency of RF1.

The protein resides in the cytoplasm. In terms of biological role, peptide chain release factor 1 directs the termination of translation in response to the peptide chain termination codons UAG and UAA. This chain is Peptide chain release factor 1, found in Deinococcus deserti (strain DSM 17065 / CIP 109153 / LMG 22923 / VCD115).